We begin with the raw amino-acid sequence, 894 residues long: MDGMGEGPDGMGFDMPMLMNQQPHLFGGYSRDSSRGSPLNNVLSNPTYNEEPGMAGEDNNDAKRRRIARACDMCRKKKIKCDGKMPKCSHCINYRTDCVFTQVEKKRNPPKGAKYIEGLENRLGRMESLLRLSGLLSEDDGKTDLGTLEKRLADRSLGNTALNSLKSPTNKFNGSSATSQSQHTTASRHSTPRMDSHSSPHTAATSPNSPKESETEVEGLSDMMCSLVTNNCGETRYIGSSSGFSIFSPKGIQWVNEKTGDTSFQEMISSAYVDDNKWMYWKPEIFSDIFARRVFKPLPPKEEALSLFRDFFENFNCMFPLFHEPTFMHLVERQYSRDPYEGSGWWASINVVLAIAHRLRVMSNLVPQEEDKKAWLYLKNAMGVLTELTMRNTDLLSVQALLGMSLFLQGTPNPQPSFFLVAAAIRLSHSIGLHKRGSGFGLNPVEVEQRKRVFWIAYLLDKDICLRSGRPPVQDDDDMNVELPSEDPPDNIGNVPLSDGKGKFNLFRTLCRFATIESKVYKRLYSAKASKQSDGELLNTIGELDRELEEWKDSIPIDFRPEHEIKASHTPLILHVVVLHFSYYNCLTTIHRMSVHHGYWTSRLSNYAIQGLNARPLNPRVFLSAVLCVTAARASINLIKYIPHGDFACVWLILYYPVSALVTLFANILQNPNDARARSDVKLMNVVVNFLSTLVSDESNGSIKRMLGLCGEFERIAQVVLDKAEKESHSKKKRKAAPDEPQDLRQKTPDENSVPSPSTKRPTGAPPTATLFPSSSYPINLGNTGPDMSNPTRAFAPGQTVLGTNGVPTSMQESMHTMSGMGHDFPEMLSPNNMDSVGFGDQQPFGTPTETPMTSFQQPFVPQDLWQMPMTIEWDWADMSSNFPVFEGTPNTGP.

The zn(2)-C6 fungal-type DNA-binding region spans 71-98 (CDMCRKKKIKCDGKMPKCSHCINYRTDC). Positions 159–174 (NTALNSLKSPTNKFNG) are enriched in polar residues. Positions 159 to 219 (NTALNSLKSP…PKESETEVEG (61 aa)) are disordered. Over residues 175–189 (SSATSQSQHTTASRH) the composition is skewed to low complexity. The segment covering 199–210 (SPHTAATSPNSP) has biased composition (polar residues). The helical transmembrane segment at 649 to 669 (CVWLILYYPVSALVTLFANIL) threads the bilayer. A disordered region spans residues 724–797 (AEKESHSKKK…MSNPTRAFAP (74 aa)). Positions 736-750 (AAPDEPQDLRQKTPD) are enriched in basic and acidic residues. Composition is skewed to polar residues over residues 751 to 761 (ENSVPSPSTKR) and 771 to 792 (LFPSSSYPINLGNTGPDMSNPT).

The protein localises to the nucleus. The protein resides in the membrane. Functionally, transcription factor that regulates expression of the genes related to resistance to azole compounds. The polypeptide is ABC-transporter-regulating transcription factor (Aspergillus oryzae (strain ATCC 42149 / RIB 40) (Yellow koji mold)).